A 245-amino-acid chain; its full sequence is tRNA pseudouridine synthase A (245 aa).

The Nucleophile role is filled by Asp-52. A substrate-binding site is contributed by Tyr-111.

Belongs to the tRNA pseudouridine synthase TruA family. As to quaternary structure, homodimer.

The enzyme catalyses uridine(38/39/40) in tRNA = pseudouridine(38/39/40) in tRNA. Formation of pseudouridine at positions 38, 39 and 40 in the anticodon stem and loop of transfer RNAs. This is tRNA pseudouridine synthase A from Bradyrhizobium diazoefficiens (strain JCM 10833 / BCRC 13528 / IAM 13628 / NBRC 14792 / USDA 110).